The chain runs to 157 residues: Crossover junction endodeoxyribonuclease RuvC (157 aa).

Active-site residues include aspartate 7, glutamate 67, and aspartate 140. Mg(2+) contacts are provided by aspartate 7, glutamate 67, and aspartate 140.

The protein belongs to the RuvC family. Homodimer which binds Holliday junction (HJ) DNA. The HJ becomes 2-fold symmetrical on binding to RuvC with unstacked arms; it has a different conformation from HJ DNA in complex with RuvA. In the full resolvosome a probable DNA-RuvA(4)-RuvB(12)-RuvC(2) complex forms which resolves the HJ. Mg(2+) is required as a cofactor.

The protein resides in the cytoplasm. The catalysed reaction is Endonucleolytic cleavage at a junction such as a reciprocal single-stranded crossover between two homologous DNA duplexes (Holliday junction).. The RuvA-RuvB-RuvC complex processes Holliday junction (HJ) DNA during genetic recombination and DNA repair. Endonuclease that resolves HJ intermediates. Cleaves cruciform DNA by making single-stranded nicks across the HJ at symmetrical positions within the homologous arms, yielding a 5'-phosphate and a 3'-hydroxyl group; requires a central core of homology in the junction. The consensus cleavage sequence is 5'-(A/T)TT(C/G)-3'. Cleavage occurs on the 3'-side of the TT dinucleotide at the point of strand exchange. HJ branch migration catalyzed by RuvA-RuvB allows RuvC to scan DNA until it finds its consensus sequence, where it cleaves and resolves the cruciform DNA. The chain is Crossover junction endodeoxyribonuclease RuvC from Rickettsia bellii (strain RML369-C).